The following is a 258-amino-acid chain: Redox-sensing transcriptional repressor Rex (258 aa).

Positions 26–65 form a DNA-binding region, H-T-H motif; it reads LYLRALTALSERSVPTVSSEELAAAAGVNSAKLRKDFSYL. Residue 100–105 coordinates NAD(+); that stretch reads GIGNLG. Residues 219-258 are disordered; sequence AGEEAAADGAAPPVAARKQQRSTGSADQGPDGDVPAVMPA. Low complexity predominate over residues 225 to 234; sequence ADGAAPPVAA.

This sequence belongs to the transcriptional regulatory Rex family. Homodimer.

It localises to the cytoplasm. In terms of biological role, modulates transcription of respiratory genes in response to changes in cellular NADH/NAD(+) redox state. Binds to the DNA sequence motif 5'-TGTGAACGCGTTCACA-3' in the promoter of the cydABCD operon. May play a general role as a sensor of cellular redox balance. This chain is Redox-sensing transcriptional repressor Rex, found in Streptomyces coelicolor (strain ATCC BAA-471 / A3(2) / M145).